The primary structure comprises 427 residues: Type II methyltransferase M1.BsuMI (427 aa).

The 344-residue stretch at 84–427 (INIADLFSGC…SYLLALHQLR (344 aa)) folds into the SAM-dependent MTase C5-type domain. The active site involves Cys-176.

The protein belongs to the class I-like SAM-binding methyltransferase superfamily. C5-methyltransferase family. Monomer. May form a complex with YdiP, also seems to be active alone.

It catalyses the reaction a 2'-deoxycytidine in DNA + S-adenosyl-L-methionine = a 5-methyl-2'-deoxycytidine in DNA + S-adenosyl-L-homocysteine + H(+). Its activity is regulated as follows. Somewhat inhibited by MgCl(2) and spermidine, strongly inhibited by MnCl(2). A methylase, recognizes the double-stranded sequence 5'-YTCGAR-3', methylates C-3 on both strands, and protects the DNA from cleavage by the BsuMI endonuclease. In Bacillus subtilis (strain 168), this protein is Type II methyltransferase M1.BsuMI (ydiO).